Reading from the N-terminus, the 198-residue chain is UPF0301 protein BDI_1431 (198 aa).

It belongs to the UPF0301 (AlgH) family.

The polypeptide is UPF0301 protein BDI_1431 (Parabacteroides distasonis (strain ATCC 8503 / DSM 20701 / CIP 104284 / JCM 5825 / NCTC 11152)).